A 362-amino-acid polypeptide reads, in one-letter code: Erythritol/L-threitol dehydrogenase (362 aa).

Zn(2+)-binding residues include cysteine 45, histidine 76, glutamate 77, cysteine 109, cysteine 112, cysteine 115, and cysteine 123. 2 residues coordinate NAD(+): isoleucine 195 and aspartate 215.

Belongs to the zinc-containing alcohol dehydrogenase family. It depends on Zn(2+) as a cofactor.

The enzyme catalyses erythritol + NAD(+) = D-erythrulose + NADH + H(+). The catalysed reaction is L-threitol + NAD(+) = L-erythrulose + NADH + H(+). It functions in the pathway carbohydrate metabolism; erythritol degradation. It participates in carbohydrate metabolism; L-threitol degradation. Catalyzes the NAD-dependent reversible oxidation of erythritol and L-threitol. Involved in the degradation pathways of erythritol and L-threitol, that allow M.smegmatis to grow on these compounds as the sole carbon source. In Mycolicibacterium smegmatis (strain ATCC 700084 / mc(2)155) (Mycobacterium smegmatis), this protein is Erythritol/L-threitol dehydrogenase.